Consider the following 531-residue polypeptide: Cytochrome c oxidase subunit 1 (531 aa).

Residues 18–38 form a helical membrane-spanning segment; that stretch reads ILYLIYGMVSAMVATGMSVII. Ca(2+)-binding residues include glutamate 41 and glycine 46. The next 6 membrane-spanning stretches (helical) occupy residues 59-79, 103-123, 149-169, 185-205, 237-257, and 269-289; these read VLVTGHAIAMIFLFVMPILIG, ISFWCLPPALVCVIASVLIET, AIFAIHLTSISSLLGAINFIV, PLFVWAIFFTAILLLLSLPVL, LFYFFGHPEVYIIIIPGFGII, and IFGQIGMIYAIGSIGLLGFLV. Histidine 64 lines the Fe(II)-heme a pocket. Histidine 243 is a Cu cation binding site. The segment at residues 243-247 is a cross-link (1'-histidyl-3'-tyrosine (His-Tyr)); the sequence is HPEVY. Tyrosine 247 lines the O2 pocket. Residues histidine 292 and histidine 293 each contribute to the Cu cation site. The next 2 helical transmembrane spans lie at 312-332 and 340-360; these read MVIAIPTGIKIFSWLATLYGG and MLFALGFLFLFTIGGLTGVML. Mg(2+) contacts are provided by histidine 370 and aspartate 371. Histidine 378 is a heme a3 binding site. Histidine 380 lines the Fe(II)-heme a pocket. 2 helical membrane passes run 385–405 and 414–434; these read MGALFSLIAGYYYWGPAMFGL and VHYWLLFVSVNIIFLPMHFLG. Position 443 (proline 443) interacts with Ca(2+). A helical transmembrane segment spans residues 458-478; the sequence is WGSIMSVISVLIGLYSVLVQL.

Belongs to the heme-copper respiratory oxidase family. Component of the cytochrome c oxidase (complex IV, CIV), a multisubunit enzyme composed of a catalytic core of 3 subunits and several supernumerary subunits. The complex exists as a monomer or a dimer and forms supercomplexes (SCs) in the inner mitochondrial membrane with ubiquinol-cytochrome c oxidoreductase (cytochrome b-c1 complex, complex III, CIII). Heme serves as cofactor. Cu cation is required as a cofactor.

The protein localises to the mitochondrion inner membrane. The enzyme catalyses 4 Fe(II)-[cytochrome c] + O2 + 8 H(+)(in) = 4 Fe(III)-[cytochrome c] + 2 H2O + 4 H(+)(out). The protein operates within energy metabolism; oxidative phosphorylation. Functionally, component of the cytochrome c oxidase, the last enzyme in the mitochondrial electron transport chain which drives oxidative phosphorylation. The respiratory chain contains 3 multisubunit complexes succinate dehydrogenase (complex II, CII), ubiquinol-cytochrome c oxidoreductase (cytochrome b-c1 complex, complex III, CIII) and cytochrome c oxidase (complex IV, CIV), that cooperate to transfer electrons derived from NADH and succinate to molecular oxygen, creating an electrochemical gradient over the inner membrane that drives transmembrane transport and the ATP synthase. Cytochrome c oxidase is the component of the respiratory chain that catalyzes the reduction of oxygen to water. Electrons originating from reduced cytochrome c in the intermembrane space (IMS) are transferred via the dinuclear copper A center (CU(A)) of subunit 2 and heme A of subunit 1 to the active site in subunit 1, a binuclear center (BNC) formed by heme A3 and copper B (CU(B)). The BNC reduces molecular oxygen to 2 water molecules using 4 electrons from cytochrome c in the IMS and 4 protons from the mitochondrial matrix. This is Cytochrome c oxidase subunit 1 (COX1) from Candida albicans (strain SC5314 / ATCC MYA-2876) (Yeast).